Here is a 23-residue protein sequence, read N- to C-terminus: MWTKPAYTDLRIGFEVTMYFANR.

Positions E15 to Y19 form a cross-link, pyrroloquinoline quinone (Glu-Tyr).

The protein belongs to the PqqA family.

The protein operates within cofactor biosynthesis; pyrroloquinoline quinone biosynthesis. Required for coenzyme pyrroloquinoline quinone (PQQ) biosynthesis. PQQ is probably formed by cross-linking a specific glutamate to a specific tyrosine residue and excising these residues from the peptide. This chain is Coenzyme PQQ synthesis protein A, found in Ectopseudomonas mendocina (strain ymp) (Pseudomonas mendocina).